We begin with the raw amino-acid sequence, 295 residues long: Nicotinate-nucleotide pyrophosphorylase [carboxylating] (295 aa).

Substrate-binding positions include R107, 142 to 144 (TRK), R166, K176, E206, D227, and 256 to 258 (SGG).

It belongs to the NadC/ModD family. Hexamer formed by 3 homodimers.

The protein localises to the cytoplasm. Its subcellular location is the nucleus. The catalysed reaction is nicotinate beta-D-ribonucleotide + CO2 + diphosphate = quinolinate + 5-phospho-alpha-D-ribose 1-diphosphate + 2 H(+). Its pathway is cofactor biosynthesis; NAD(+) biosynthesis; nicotinate D-ribonucleotide from quinolinate: step 1/1. Functionally, involved in the catabolism of quinolinic acid (QA). The sequence is that of Nicotinate-nucleotide pyrophosphorylase [carboxylating] (BNA6) from Saccharomyces cerevisiae (strain ATCC 204508 / S288c) (Baker's yeast).